Reading from the N-terminus, the 187-residue chain is Oligoribonuclease (187 aa).

In terms of domain architecture, Exonuclease spans 7 to 170 (LIWIDLEMTG…DDIKDSINEL (164 aa)). Residue Y128 is part of the active site.

It belongs to the oligoribonuclease family.

It is found in the cytoplasm. In terms of biological role, 3'-to-5' exoribonuclease specific for small oligoribonucleotides. The protein is Oligoribonuclease of Legionella pneumophila (strain Paris).